Reading from the N-terminus, the 346-residue chain is Protein RecA (346 aa).

Residue glycine 68 to threonine 75 participates in ATP binding.

This sequence belongs to the RecA family.

Its subcellular location is the cytoplasm. Its function is as follows. Can catalyze the hydrolysis of ATP in the presence of single-stranded DNA, the ATP-dependent uptake of single-stranded DNA by duplex DNA, and the ATP-dependent hybridization of homologous single-stranded DNAs. It interacts with LexA causing its activation and leading to its autocatalytic cleavage. This Heliobacterium modesticaldum (strain ATCC 51547 / Ice1) protein is Protein RecA.